A 510-amino-acid chain; its full sequence is Cytochrome P450 4A6 (510 aa).

Positions 1 to 4 (MSVS) are excised as a propeptide. Heme contacts are provided by Glu-321 and Cys-457.

It belongs to the cytochrome P450 family. The cofactor is heme. Liver; kidney.

The protein resides in the endoplasmic reticulum membrane. It is found in the microsome membrane. It catalyses the reaction an omega-methyl-long-chain fatty acid + reduced [NADPH--hemoprotein reductase] + O2 = an omega-hydroxy-long-chain fatty acid + oxidized [NADPH--hemoprotein reductase] + H2O + H(+). Cytochromes P450 are a group of heme-thiolate monooxygenases. In liver microsomes, this enzyme is involved in an NADPH-dependent electron transport pathway. It oxidizes a variety of structurally unrelated compounds, including steroids, fatty acids, and xenobiotics. Functionally, the kidney P-450 system is rather specialized for the omega-hydroxylation of fatty acids. Both P450-KA1 and P450-KA2 catalyze the omega- and (omega-1)-hydroxylation of various fatty acids with no drug-metabolizing activity, and hydroxylate prostaglandin A1 and A2 solely at the omega-position. This is Cytochrome P450 4A6 (CYP4A6) from Oryctolagus cuniculus (Rabbit).